The sequence spans 278 residues: Digeranylgeranylglyceryl phosphate synthase (278 aa).

The next 8 helical transmembrane spans lie at 12–32, 34–54, 92–112, 129–149, 153–173, 204–224, 226–246, and 257–277; these read LKNC…ASYF, LAMV…CGFG, LVVM…MAVL, IIGN…GGIA, IDVT…REII, FLLI…FFGI, YMIS…KLVF, and SRNI…GSLF.

This sequence belongs to the UbiA prenyltransferase family. DGGGP synthase subfamily. Mg(2+) serves as cofactor.

Its subcellular location is the cell membrane. It carries out the reaction sn-3-O-(geranylgeranyl)glycerol 1-phosphate + (2E,6E,10E)-geranylgeranyl diphosphate = 2,3-bis-O-(geranylgeranyl)-sn-glycerol 1-phosphate + diphosphate. It participates in membrane lipid metabolism; glycerophospholipid metabolism. Its function is as follows. Prenyltransferase that catalyzes the transfer of the geranylgeranyl moiety of geranylgeranyl diphosphate (GGPP) to the C2 hydroxyl of (S)-3-O-geranylgeranylglyceryl phosphate (GGGP). This reaction is the second ether-bond-formation step in the biosynthesis of archaeal membrane lipids. The protein is Digeranylgeranylglyceryl phosphate synthase of Methanococcus maripaludis (strain DSM 14266 / JCM 13030 / NBRC 101832 / S2 / LL).